Reading from the N-terminus, the 351-residue chain is D-alanine--D-alanine ligase (351 aa).

The region spanning 135 to 343 (NQIFLQSGQK…MEEVFSDLIE (209 aa)) is the ATP-grasp domain. 167–222 (LETLGFPQFLKPVEGGSSVSVYKITNREQLKEKLALIFESDSKVMSQSFLTGIEVS) lines the ATP pocket. The Mg(2+) site is built by Asp298, Glu310, and Asn312.

This sequence belongs to the D-alanine--D-alanine ligase family. Mg(2+) serves as cofactor. The cofactor is Mn(2+).

The protein resides in the cytoplasm. The catalysed reaction is 2 D-alanine + ATP = D-alanyl-D-alanine + ADP + phosphate + H(+). It participates in cell wall biogenesis; peptidoglycan biosynthesis. Functionally, cell wall formation. This chain is D-alanine--D-alanine ligase, found in Leptospira interrogans serogroup Icterohaemorrhagiae serovar Lai (strain 56601).